Here is a 393-residue protein sequence, read N- to C-terminus: UDP-galactose translocator (393 aa).

Helical transmembrane passes span 3-23 (AVGS…AGAL), 37-57 (YISL…IRYA), 65-85 (FFAT…CLLL), 97-117 (LVLF…KLAV), 140-160 (TFQV…VLML), 169-189 (WASL…QAGG), 200-220 (GVGL…GVYF), 238-258 (LGLF…GTAV), 269-289 (PAVW…AVVV), and 315-335 (LFGF…IGAV). Positions 353 to 393 (APTSGPCTHQQPPGQPPPPQLSSHHGDLSTEPFLPKSVLVK) are disordered.

This sequence belongs to the nucleotide-sugar transporter family. SLC35A subfamily. Interacts with SLC35A3; the interaction is reduced in the presence of SLC35A4. Found in a complex with SLC35A3 and SLC35A4.

Its subcellular location is the golgi apparatus membrane. It carries out the reaction UMP(out) + UDP-alpha-D-galactose(in) = UMP(in) + UDP-alpha-D-galactose(out). It catalyses the reaction UDP-N-acetyl-alpha-D-galactosamine(in) + UMP(out) = UDP-N-acetyl-alpha-D-galactosamine(out) + UMP(in). The catalysed reaction is UMP(out) + UDP-alpha-D-glucose(in) = UMP(in) + UDP-alpha-D-glucose(out). The enzyme catalyses UMP(out) + UDP-N-acetyl-alpha-D-glucosamine(in) = UMP(in) + UDP-N-acetyl-alpha-D-glucosamine(out). It carries out the reaction UDP-alpha-D-galactose(in) + AMP(out) = UDP-alpha-D-galactose(out) + AMP(in). It catalyses the reaction UDP-alpha-D-galactose(in) + CMP(out) = UDP-alpha-D-galactose(out) + CMP(in). The catalysed reaction is UDP-N-acetyl-alpha-D-galactosamine(out) + UDP-alpha-D-galactose(in) = UDP-N-acetyl-alpha-D-galactosamine(in) + UDP-alpha-D-galactose(out). The enzyme catalyses UDP-N-acetyl-alpha-D-glucosamine(out) + UDP-alpha-D-galactose(in) = UDP-N-acetyl-alpha-D-glucosamine(in) + UDP-alpha-D-galactose(out). It carries out the reaction UDP-alpha-D-galactose(in) + UDP-alpha-D-glucose(out) = UDP-alpha-D-galactose(out) + UDP-alpha-D-glucose(in). It catalyses the reaction UMP(out) + CMP(in) = UMP(in) + CMP(out). The catalysed reaction is UMP(out) + AMP(in) = UMP(in) + AMP(out). Functionally, transports uridine diphosphate galactose (UDP-galactose) from the cytosol into the Golgi apparatus, functioning as an antiporter that exchanges UDP-galactose for UMP. It is also able to exchange UDP-galactose for AMP and CMP, and to transport UDP-N-acetylgalactosamine (UDP-GalNAc) and other nucleotide sugars. As a provider of UDP-galactose to galactosyltransferases present in the Golgi apparatus, it is necessary for globotriaosylceramide/globoside (Gb3Cer) synthesis from lactosylceramide. In Bos taurus (Bovine), this protein is UDP-galactose translocator.